Here is a 60-residue protein sequence, read N- to C-terminus: MGNPARKTFRAKRDSRRAQTFKASLPGIVECPQCHEMKMAHRVCKNCGHYKGKEVVSVEE.

Belongs to the bacterial ribosomal protein bL32 family.

This is Large ribosomal subunit protein bL32 from Clostridium perfringens (strain ATCC 13124 / DSM 756 / JCM 1290 / NCIMB 6125 / NCTC 8237 / Type A).